The primary structure comprises 644 residues: Protein cueball (644 aa).

The first 26 residues, 1 to 26, serve as a signal peptide directing secretion; that stretch reads MIRIRFGMDVLLVLLLATCLLSPAHG. Over 27 to 531 the chain is Extracellular; it reads TPLEWDFAVT…VCLTPKVWTS (505 aa). N-linked (GlcNAc...) asparagine glycans are attached at residues Asn82 and Asn108. 3 LDL-receptor class B repeats span residues 121–166, 167–211, and 212–257; these read MNLF…DVCR, RKLY…DQLS, and DRLF…TNDA. Residues Asn175, Asn190, and Asn196 are each glycosylated (N-linked (GlcNAc...) asparagine). N-linked (GlcNAc...) asparagine glycosylation occurs at Asn313. EGF-like domains follow at residues 398–430 and 433–471; these read EIRE…FTGE and EVSV…ARCE. 5 disulfides stabilise this stretch: Cys402/Cys411, Cys406/Cys421, Cys437/Cys447, Cys441/Cys459, and Cys461/Cys470. 2 N-linked (GlcNAc...) asparagine glycosylation sites follow: Asn473 and Asn508. The helical transmembrane segment at 532–552 threads the bilayer; that stretch reads SVIIILVIGIVSSLLLVAVIV. The Cytoplasmic portion of the chain corresponds to 553 to 644; sequence HGIRRLYKPK…LIHNMEDDLY (92 aa).

The protein belongs to the cueball family.

The protein localises to the cell membrane. Has a role in spermatogenesis and oogenesis. The sequence is that of Protein cueball from Drosophila erecta (Fruit fly).